A 178-amino-acid polypeptide reads, in one-letter code: Large ribosomal subunit protein uL6 (178 aa).

The protein belongs to the universal ribosomal protein uL6 family. In terms of assembly, part of the 50S ribosomal subunit.

Its function is as follows. This protein binds to the 23S rRNA, and is important in its secondary structure. It is located near the subunit interface in the base of the L7/L12 stalk, and near the tRNA binding site of the peptidyltransferase center. The protein is Large ribosomal subunit protein uL6 of Corynebacterium kroppenstedtii (strain DSM 44385 / JCM 11950 / CIP 105744 / CCUG 35717).